The sequence spans 445 residues: Glutamate--tRNA ligase 1 (445 aa).

The 'HIGH' region motif lies at 10–20 (PSPTGMLHVGN). The 'KMSKS' region signature appears at 240–244 (KISKR). ATP is bound at residue Lys-243.

The protein belongs to the class-I aminoacyl-tRNA synthetase family. Glutamate--tRNA ligase type 1 subfamily. As to quaternary structure, monomer.

The protein localises to the cytoplasm. The enzyme catalyses tRNA(Glu) + L-glutamate + ATP = L-glutamyl-tRNA(Glu) + AMP + diphosphate. In terms of biological role, catalyzes the attachment of glutamate to tRNA(Glu) in a two-step reaction: glutamate is first activated by ATP to form Glu-AMP and then transferred to the acceptor end of tRNA(Glu). This is Glutamate--tRNA ligase 1 from Rickettsia bellii (strain OSU 85-389).